The chain runs to 348 residues: MKVIVDNKIPYIREAIEQIADEVIYAPGKDFTPELVQDADALIIRTRTRCDRSLLAGSKVKFIATATIGFDHIDTAYCREAGITWTNAPGCNSASVAQYIQSTLFILQQTRGMKLNQMTIGIVGVGNVGSKVADVARKLGIQVMLNDLPREEREESTMFASLKSIAEKCDIITFHVPLYKEGKYKTYHLADKHFFHSLKKGAVIMNTSRGEVIETEALLEALRSGILSDAVIDVWEHEPDIDLELLEKVIIGTPHIAGYSADGKANATRMSLEALCRFFRIETDYRITPPEPKNKLISTATYEEASLMIYDPRRDSDALKSHPGLFEQLRGDYPLRREEGAYRIVITK.

Residues Thr-46 and Thr-67 each contribute to the substrate site. Asp-147 contacts NAD(+). The active site involves Arg-209. Asp-233 contributes to the NAD(+) binding site. Glu-238 is an active-site residue. His-255 acts as the Proton donor in catalysis. Gly-258 contributes to the NAD(+) binding site. Tyr-259 contacts substrate.

This sequence belongs to the D-isomer specific 2-hydroxyacid dehydrogenase family. PdxB subfamily. Homodimer.

Its subcellular location is the cytoplasm. The enzyme catalyses 4-phospho-D-erythronate + NAD(+) = (R)-3-hydroxy-2-oxo-4-phosphooxybutanoate + NADH + H(+). It functions in the pathway cofactor biosynthesis; pyridoxine 5'-phosphate biosynthesis; pyridoxine 5'-phosphate from D-erythrose 4-phosphate: step 2/5. In terms of biological role, catalyzes the oxidation of erythronate-4-phosphate to 3-hydroxy-2-oxo-4-phosphonooxybutanoate. The chain is Erythronate-4-phosphate dehydrogenase from Bacteroides fragilis (strain YCH46).